The chain runs to 243 residues: Orotidine 5'-phosphate decarboxylase (243 aa).

Substrate contacts are provided by residues D18, K39, 66–75 (DLKFHDIPTT), T130, R192, Q201, G221, and R222. The Proton donor role is filled by K68.

This sequence belongs to the OMP decarboxylase family. Type 1 subfamily. In terms of assembly, homodimer.

The enzyme catalyses orotidine 5'-phosphate + H(+) = UMP + CO2. It functions in the pathway pyrimidine metabolism; UMP biosynthesis via de novo pathway; UMP from orotate: step 2/2. Its function is as follows. Catalyzes the decarboxylation of orotidine 5'-monophosphate (OMP) to uridine 5'-monophosphate (UMP). The polypeptide is Orotidine 5'-phosphate decarboxylase (Synechococcus sp. (strain CC9311)).